The sequence spans 606 residues: Leucine-rich repeat and immunoglobulin-like domain-containing nogo receptor-interacting protein 2 (606 aa).

The signal sequence occupies residues 1–27; that stretch reads MLHTAISCWQPFLGLAVVLIFMGSTIG. The 30-residue stretch at 28–57 folds into the LRRNT domain; it reads CPARCECSAQNKSVSCHRRRLIAIPEGIPI. The Extracellular portion of the chain corresponds to 28-545; the sequence is CPARCECSAQ…LDLKTILVST (518 aa). The N-linked (GlcNAc...) asparagine glycan is linked to N38. LRR repeat units follow at residues 58-79, 82-103, 106-127, 130-151, 154-175, 178-199, 202-223, 226-247, 250-271, 274-295, 298-319, and 322-343; these read ETKILDLSKNRLKSVNPEEFIS, LLEEIDLSDNIIANVEPGAFNN, NLRSLRLKGNRLKLVPLGVFTG, NLTKLDISENKIVILLDYMFQD, NLKSLEVGDNDLVYISHRAFSG, SLEQLTLEKCNLTAVPTEALSH, SLISLHLKHLNINNMPVYAFKR, HLKHLEIDYWPLLDMMPANSLY, NLTSLSVTNTNLSTVPFLAFKH, YLTHLNLSYNPISTIEAGMFSD, RLQELHIVGAQLRTIEPHSFQG, and FLRVLNVSQNLLETLEENVFSS. N-linked (GlcNAc...) asparagine glycosylation occurs at N130. N-linked (GlcNAc...) asparagine glycosylation is present at N188. The N-linked (GlcNAc...) asparagine glycan is linked to N279. The N-linked (GlcNAc...) asparagine glycan is linked to N327. The LRRCT domain maps to 355–409; the sequence is NPLACDCRLLWILQRQPTLQFGGQQPMCAGPDTIRERSFKDFHSTALSFYFTCKK. The Ig-like C2-type domain maps to 410-499; that stretch reads PKIREKKLQH…GNDTFTASLT (90 aa). Residues C432 and C483 are joined by a disulfide bond. A helical transmembrane segment spans residues 546 to 566; sequence AMGCFTFLGVVLFCFLLLFVW. Over 567 to 606 the chain is Cytoplasmic; the sequence is SRGKGKHKNSIDLEYVPRKNNGAVVEGEVAGPRRFNMKMI.

The protein resides in the membrane. The protein is Leucine-rich repeat and immunoglobulin-like domain-containing nogo receptor-interacting protein 2 (LINGO2) of Homo sapiens (Human).